Here is a 708-residue protein sequence, read N- to C-terminus: MKEWRRNILGRELVVQYGKVAKQSSGSALVRFGDTVVLATANISDKAVEGIDFVPLTVEFQERFYAAGKIPGGFIKREGKPSESAILSARLIDRPIRPLFPKKLRNEVQVIVTVLSVDPNVPPDVVGIFAASLALNVSKIPFEGIVAGIRVGYRDGQFIALPSEEDIEKGLMDITVAGTKDAVTMVEGEAKEVAEEDMVKALRFAHSVIKELVDFQEEILSEFNVEKIPVVEPTPPEGLVEAFKDLLNKEELERRILVKVKKEREVALKEYEEQLLNQIAEKLSVTDLEGIKPFVSELYEDAVKKTMRRLIVEKGIRADGRKPTEIRPISCEVGLFPRTHGSALFTRGETQSLGIVTLGAPMDVQIIDTLLEEGVKRFMLHYNFPPFCTGEVKPLRGPSRREIGHGHLAERALKNMLPPEEEFPYTIRVVSEILESNGSSSMATVCSGSLALMDAGVPIKKHVAGIAMGLILEEDAEIILTDIIGMEDHYGDMDFKVAGTRDGITAFQMDCKVSGVSDELLMKALMQAREARMYILDRMYETISAPRPHLSKYAPIIKVTKVDPEKVADVIGPGGRVIKKIIKDFDVKVEIDDETGLVKVVGSSEENVDKAIELIREIAKEIEVGEVLEGKVTRIEPYGLFIEVRPGKIGLLHQSKVGEDMRQFLKKVKVGDTIKVQVINIDDLGRLQFKRVTEGENTQHGKTHSKRN.

Mg(2+) is bound by residues Asp-488 and Asp-494. One can recognise a KH domain in the interval 555-615; it reads PIIKVTKVDP…ENVDKAIELI (61 aa). In terms of domain architecture, S1 motif spans 625-692; it reads GEVLEGKVTR…DLGRLQFKRV (68 aa).

This sequence belongs to the polyribonucleotide nucleotidyltransferase family. Requires Mg(2+) as cofactor.

The protein localises to the cytoplasm. The catalysed reaction is RNA(n+1) + phosphate = RNA(n) + a ribonucleoside 5'-diphosphate. Involved in mRNA degradation. Catalyzes the phosphorolysis of single-stranded polyribonucleotides processively in the 3'- to 5'-direction. The sequence is that of Polyribonucleotide nucleotidyltransferase from Thermotoga petrophila (strain ATCC BAA-488 / DSM 13995 / JCM 10881 / RKU-1).